A 521-amino-acid polypeptide reads, in one-letter code: MSLSRSEEMHRLTENVYKTIMEQFNPSLRNFIAMGKNYEKALAGVTFAAKGYFDALVKMGELASESQGSKELGDVLFQMAEVHRQIQNQLEEMLKSFHNELLTQLEQKVELDSRYLSAALKKYQAEQRSKGDALDKCQAELKKLRKKSQGSKNPQKYSDKELQYIDAISNKQGELENYVSDGYKTALTEERRRFCFLVEKQCAVAKNSAAYHSKGKELLAQKLPVWQQACADPNKIPDRAVQLMQQIASSNGSILPSTLSASKSNLVISDPIPGAKPLPVPPELAPFVGRMSAQENVPVMNGVAGPDSEDYNPWADRKAAQPKSLSPPQSQSKLSDSYSNTLPVRKSVTPKNSYATTENKTLPRSSSMAAGLERNGRMRVKAIFSHAAGDNSTLLSFKEGDLITLLVPEARDGWHYGESEKTKMRGWFPFSYTRVLDSDGSDRLHMSLQQGKSSSTGNLLDKDDLAVPPPDYGTSSRAFPTQTAGTFKQRPYSVAVPAFSQGLDDYGARSVSSADVEVARF.

The 250-residue stretch at 1 to 250 (MSLSRSEEMH…VQLMQQIASS (250 aa)) folds into the IMD domain. Residues 132-153 (DALDKCQAELKKLRKKSQGSKN) are a coiled coil. Residues S262, S324, S326, and S337 each carry the phosphoserine modification. Residues 299–370 (VMNGVAGPDS…TLPRSSSMAA (72 aa)) form a disordered region. Residues 321-335 (QPKSLSPPQSQSKLS) show a composition bias toward low complexity. Residue T341 is modified to Phosphothreonine. At S347 the chain carries Phosphoserine. Residues 349 to 368 (TPKNSYATTENKTLPRSSSM) are compositionally biased toward polar residues. Position 361 is a phosphothreonine (T361). Residues S367, S385, S396, and S455 each carry the phosphoserine modification. In terms of domain architecture, SH3 spans 375–438 (NGRMRVKAIF…PFSYTRVLDS (64 aa)). The disordered stretch occupies residues 445 to 480 (HMSLQQGKSSSTGNLLDKDDLAVPPPDYGTSSRAFP). The span at 447–458 (SLQQGKSSSTGN) shows a compositional bias: polar residues.

Homodimer. Interacts with CDC42 and RAC1 that have been activated by GTP binding. Interacts with ATN1, ADGRB1, DIAPH1, EPS8, SHANK1, SHANK2, SHANK3, TIAM1, WASF1 and WASF2. Interacts with ENAH after recruitment of CDC42. In terms of processing, phosphorylated on tyrosine residues by INSR in response to insulin treatment.

The protein localises to the cytoplasm. It is found in the membrane. Its subcellular location is the cell projection. It localises to the filopodium. The protein resides in the ruffle. The protein localises to the cytoskeleton. Its function is as follows. Adapter protein that links membrane-bound small G-proteins to cytoplasmic effector proteins. Necessary for CDC42-mediated reorganization of the actin cytoskeleton and for RAC1-mediated membrane ruffling. Involved in the regulation of the actin cytoskeleton by WASF family members and the Arp2/3 complex. Plays a role in neurite growth. Acts syngeristically with ENAH to promote filipodia formation. Plays a role in the reorganization of the actin cytoskeleton in response to bacterial infection. Participates in actin bundling when associated with EPS8, promoting filopodial protrusions. This Cricetulus griseus (Chinese hamster) protein is BAR/IMD domain-containing adapter protein 2 (BAIAP2).